The chain runs to 215 residues: Beta-crystallin A3-2 (215 aa).

The interval 1–30 (MEIPAIQTEREDITSEKMAQINPLPVPLGP) is N-terminal arm. 2 Beta/gamma crystallin 'Greek key' domains span residues 31-70 (WKIT…KVEC) and 71-117 (GAWI…RPIC). The connecting peptide stretch occupies residues 118–123 (SANHEE). Beta/gamma crystallin 'Greek key' domains follow at residues 124-165 (SKLV…KVQC) and 166-214 (GAWV…RRIQ).

Belongs to the beta/gamma-crystallin family. As to quaternary structure, homo/heterodimer, or complexes of higher-order. The structure of beta-crystallin oligomers seems to be stabilized through interactions between the N-terminal arms. In terms of processing, the N-terminus is blocked.

Functionally, crystallins are the dominant structural components of the vertebrate eye lens. This is Beta-crystallin A3-2 from Aquarana catesbeiana (American bullfrog).